We begin with the raw amino-acid sequence, 787 residues long: Longitudinals lacking protein, isoforms A/B/D/L (787 aa).

The BTB domain occupies 32–97 (VDCTLAAEGK…MYRGEVNISQ (66 aa)). Disordered stretches follow at residues 115–200 (LSDN…SSVL), 228–340 (SSGP…ASAS), 506–560 (AKDV…SGGK), and 653–677 (TTGS…SVLG). Composition is skewed to low complexity over residues 162 to 175 (SGDV…SSSP), 228 to 251 (SSGP…LTST), 263 to 293 (TSST…QTTS), 329 to 340 (NSATGPNPASAS), 537 to 560 (HSSS…SGGK), and 659 to 668 (SPSNSGHNNS). The C2H2-type 1; degenerate zinc-finger motif lies at 685 to 707 (HPCPVCGRVYKLKSSLRNHQKWE). The C2H2-type 2 zinc-finger motif lies at 714 to 737 (FQCPFCVYRAKQKMHIGRHMERMH).

In terms of assembly, isoform D interacts with JIL-1. As to expression, by stage 11, isoform B is expressed throughout the mesoderm, whereas isoform A, isoform D and isoform L are expressed throughout the ectoderm. Expression becomes restricted during later stages; starting from stage 14 to 16, isoform B is expressed in muscle. Isoform A, isoform D, and at low levels isoform B, are expressed in the CNS. Expression is also seen in specific types of cells in the embryo; isoform A and isoform L are expressed in a dynamic pattern in the ventral neurogenic region starting at stage 7. Isoform L is expressed around the tracheal pits at stage 11.

It localises to the nucleus. Its function is as follows. Putative transcription factor required for axon growth and guidance in the central and peripheral nervous systems. Repels CNS axons away from the midline by promoting the expression of the midline repellent sli and its receptor robo. In Drosophila melanogaster (Fruit fly), this protein is Longitudinals lacking protein, isoforms A/B/D/L.